A 400-amino-acid chain; its full sequence is Subtilisin-like protease CPC735_047380 (400 aa).

The signal sequence occupies residues 1-19 (MARINVVVSFLAALAVVQA). Positions 20 to 118 (AQLLNLDGQK…IEPQRTFRAF (99 aa)) are excised as a propeptide. Residues 35–116 (SYVVVMNDGL…NYIEPQRTFR (82 aa)) form the Inhibitor I9 domain. Positions 128–400 (SWGLGRISHT…DKLLYNGSGQ (273 aa)) constitute a Peptidase S8 domain. Asn153 carries an N-linked (GlcNAc...) asparagine glycan. Catalysis depends on charge relay system residues Asp160 and His191. N-linked (GlcNAc...) asparagine glycans are attached at residues Asn244 and Asn252. Residue Ser346 is the Charge relay system of the active site. N-linked (GlcNAc...) asparagine glycosylation occurs at Asn396.

The protein belongs to the peptidase S8 family.

It is found in the secreted. Functionally, secreted subtilisin-like serine protease with keratinolytic activity that contributes to pathogenicity. The chain is Subtilisin-like protease CPC735_047380 from Coccidioides posadasii (strain C735) (Valley fever fungus).